The sequence spans 208 residues: Holliday junction branch migration complex subunit RuvA (208 aa).

Residues 1–64 (MIGKLKGIVD…EDMIRLYGFR (64 aa)) form a domain I region. The interval 65-143 (SDAEREWFRL…AFAPVDPALV (79 aa)) is domain II. The segment at 144–152 (ALTGAVEDR) is flexible linker. A domain III region spans residues 153-208 (TAPQPVADAISALVNLGYPQVQASAAIAAALKGLGDGAETVEAKTLIRLGLRELAR).

This sequence belongs to the RuvA family. As to quaternary structure, homotetramer. Forms an RuvA(8)-RuvB(12)-Holliday junction (HJ) complex. HJ DNA is sandwiched between 2 RuvA tetramers; dsDNA enters through RuvA and exits via RuvB. An RuvB hexamer assembles on each DNA strand where it exits the tetramer. Each RuvB hexamer is contacted by two RuvA subunits (via domain III) on 2 adjacent RuvB subunits; this complex drives branch migration. In the full resolvosome a probable DNA-RuvA(4)-RuvB(12)-RuvC(2) complex forms which resolves the HJ.

It localises to the cytoplasm. The RuvA-RuvB-RuvC complex processes Holliday junction (HJ) DNA during genetic recombination and DNA repair, while the RuvA-RuvB complex plays an important role in the rescue of blocked DNA replication forks via replication fork reversal (RFR). RuvA specifically binds to HJ cruciform DNA, conferring on it an open structure. The RuvB hexamer acts as an ATP-dependent pump, pulling dsDNA into and through the RuvAB complex. HJ branch migration allows RuvC to scan DNA until it finds its consensus sequence, where it cleaves and resolves the cruciform DNA. This is Holliday junction branch migration complex subunit RuvA from Methylorubrum populi (strain ATCC BAA-705 / NCIMB 13946 / BJ001) (Methylobacterium populi).